The primary structure comprises 218 residues: 1-Cys peroxiredoxin (218 aa).

The 161-residue stretch at 4 to 164 (LTIGDTIPDL…VLRVVESLQK (161 aa)) folds into the Thioredoxin domain. Catalysis depends on C46, which acts as the Cysteine sulfenic acid (-SOH) intermediate. Residues 194-217 (KEMFPQGFKTADLPSKKEYLRFTN) carry the Bipartite nuclear localization signal motif.

It belongs to the peroxiredoxin family. Prx6 subfamily.

It localises to the nucleus. The protein resides in the cytoplasm. It carries out the reaction a hydroperoxide + [thioredoxin]-dithiol = an alcohol + [thioredoxin]-disulfide + H2O. Thiol-specific peroxidase that catalyzes the reduction of hydrogen peroxide and organic hydroperoxides to water and alcohols, respectively. Seems to contribute to the inhibition of germination during stress. This chain is 1-Cys peroxiredoxin, found in Medicago truncatula (Barrel medic).